The sequence spans 938 residues: Isoleucine--tRNA ligase (938 aa).

Positions 61-71 match the 'HIGH' region motif; it reads PYANGDIHLGT. Glu559 lines the L-isoleucyl-5'-AMP pocket. The 'KMSKS' region signature appears at 601 to 605; that stretch reads KMSKS. Lys604 serves as a coordination point for ATP. Cys904, Cys907, Cys923, and Cys926 together coordinate Zn(2+).

It belongs to the class-I aminoacyl-tRNA synthetase family. IleS type 1 subfamily. Monomer. Requires Zn(2+) as cofactor.

Its subcellular location is the cytoplasm. It catalyses the reaction tRNA(Ile) + L-isoleucine + ATP = L-isoleucyl-tRNA(Ile) + AMP + diphosphate. Catalyzes the attachment of isoleucine to tRNA(Ile). As IleRS can inadvertently accommodate and process structurally similar amino acids such as valine, to avoid such errors it has two additional distinct tRNA(Ile)-dependent editing activities. One activity is designated as 'pretransfer' editing and involves the hydrolysis of activated Val-AMP. The other activity is designated 'posttransfer' editing and involves deacylation of mischarged Val-tRNA(Ile). This Symbiobacterium thermophilum (strain DSM 24528 / JCM 14929 / IAM 14863 / T) protein is Isoleucine--tRNA ligase.